The chain runs to 491 residues: Arginine decarboxylase (491 aa).

At lysine 227 the chain carries N6-(pyridoxal phosphate)lysine.

Belongs to the Orn/Lys/Arg decarboxylase class-I family. The cofactor is pyridoxal 5'-phosphate.

It localises to the cytoplasm. The catalysed reaction is L-arginine + H(+) = agmatine + CO2. It functions in the pathway amine and polyamine biosynthesis; agmatine biosynthesis; agmatine from L-arginine: step 1/1. Its function is as follows. Catalyzes the formation of agmatine from arginine. The polypeptide is Arginine decarboxylase (speA) (Halalkalibacterium halodurans (strain ATCC BAA-125 / DSM 18197 / FERM 7344 / JCM 9153 / C-125) (Bacillus halodurans)).